A 208-amino-acid polypeptide reads, in one-letter code: Protein-L-isoaspartate O-methyltransferase (208 aa).

Ser-59 is a catalytic residue.

This sequence belongs to the methyltransferase superfamily. L-isoaspartyl/D-aspartyl protein methyltransferase family.

It localises to the cytoplasm. It carries out the reaction [protein]-L-isoaspartate + S-adenosyl-L-methionine = [protein]-L-isoaspartate alpha-methyl ester + S-adenosyl-L-homocysteine. In terms of biological role, catalyzes the methyl esterification of L-isoaspartyl residues in peptides and proteins that result from spontaneous decomposition of normal L-aspartyl and L-asparaginyl residues. It plays a role in the repair and/or degradation of damaged proteins. This Pectobacterium carotovorum subsp. carotovorum (strain PC1) protein is Protein-L-isoaspartate O-methyltransferase.